We begin with the raw amino-acid sequence, 470 residues long: Uronate isomerase (470 aa).

The protein belongs to the metallo-dependent hydrolases superfamily. Uronate isomerase family.

It catalyses the reaction D-glucuronate = D-fructuronate. The enzyme catalyses aldehydo-D-galacturonate = keto-D-tagaturonate. The protein operates within carbohydrate metabolism; pentose and glucuronate interconversion. In Escherichia coli O157:H7 (strain EC4115 / EHEC), this protein is Uronate isomerase.